We begin with the raw amino-acid sequence, 185 residues long: Potassium-transporting ATPase KdpC subunit (185 aa).

Residues 14 to 34 (ALSLLTGVAYPLALTGIAAVI) traverse the membrane as a helical segment.

The protein belongs to the KdpC family. In terms of assembly, the system is composed of three essential subunits: KdpA, KdpB and KdpC.

The protein resides in the cell inner membrane. Functionally, part of the high-affinity ATP-driven potassium transport (or Kdp) system, which catalyzes the hydrolysis of ATP coupled with the electrogenic transport of potassium into the cytoplasm. This subunit acts as a catalytic chaperone that increases the ATP-binding affinity of the ATP-hydrolyzing subunit KdpB by the formation of a transient KdpB/KdpC/ATP ternary complex. This is Potassium-transporting ATPase KdpC subunit from Cereibacter sphaeroides (strain ATCC 17023 / DSM 158 / JCM 6121 / CCUG 31486 / LMG 2827 / NBRC 12203 / NCIMB 8253 / ATH 2.4.1.) (Rhodobacter sphaeroides).